A 287-amino-acid chain; its full sequence is MDRISSPKKTKEIVQKYEFKFSKSLGQNFLIDQNILDNIVDGANVSEGDCIIEVGPGIGSLTQNIAERADSVLAVEIDKTLIPILKETLGAYPNVEVINEDVLKLDLHKLIEEKFPGRNVKVIANLPYYVTTPIIMKFLEEKVPVKSLTIMIQKEVADRMQAGPGTKDYGALSIAVQYYSNPKILLKVPPSVFIPQPKVESTVIRLDILDTPKVSVEREDLFFSLVKDAFGKRRKTLLNALSTGDLKLEKSLLREVLAASNIDENRRGETLTIEEYGVLANNLAKKL.

Asn-28, Leu-30, Gly-55, Glu-76, Asp-101, and Asn-125 together coordinate S-adenosyl-L-methionine.

Belongs to the class I-like SAM-binding methyltransferase superfamily. rRNA adenine N(6)-methyltransferase family. RsmA subfamily.

Its subcellular location is the cytoplasm. The catalysed reaction is adenosine(1518)/adenosine(1519) in 16S rRNA + 4 S-adenosyl-L-methionine = N(6)-dimethyladenosine(1518)/N(6)-dimethyladenosine(1519) in 16S rRNA + 4 S-adenosyl-L-homocysteine + 4 H(+). Functionally, specifically dimethylates two adjacent adenosines (A1518 and A1519) in the loop of a conserved hairpin near the 3'-end of 16S rRNA in the 30S particle. May play a critical role in biogenesis of 30S subunits. This Alkaliphilus oremlandii (strain OhILAs) (Clostridium oremlandii (strain OhILAs)) protein is Ribosomal RNA small subunit methyltransferase A.